The chain runs to 185 residues: Photosystem I assembly protein Ycf4 (185 aa).

A run of 2 helical transmembrane segments spans residues 20-40 (GNFF…AVGA) and 57-77 (ILFF…LFIS).

It belongs to the Ycf4 family.

It is found in the plastid. It localises to the chloroplast thylakoid membrane. In terms of biological role, seems to be required for the assembly of the photosystem I complex. The sequence is that of Photosystem I assembly protein Ycf4 from Oryza nivara (Indian wild rice).